Here is a 279-residue protein sequence, read N- to C-terminus: Zinc-finger homeodomain protein 1 (279 aa).

Residues 1-13 (MDFDDHDDGDEEM) are compositionally biased toward acidic residues. The tract at residues 1–47 (MDFDDHDDGDEEMPPMPVSSSYETPPQHGLAGGGMAPKPPGEIGSHV) is disordered. A ZF-HD dimerization-type; degenerate zinc finger spans residues 57–106 (YRECLKNHAVGIGGHAVDGCGEFMAAGEEGTIDALRCAACNCHRNFHRKE). The interval 157 to 191 (AAAAAAGGHPQRPLALPSTSHSGRDDGDDLSGMVG) is disordered. Residues 215–278 (KKRFRTKFTQ…NNKHTLGKKL (64 aa)) constitute a DNA-binding region (homeobox).

In terms of assembly, homo- and heterodimer with other ZFHD proteins.

It is found in the nucleus. In terms of biological role, putative transcription factor. The chain is Zinc-finger homeodomain protein 1 (ZHD1) from Oryza sativa subsp. indica (Rice).